The sequence spans 311 residues: Splicing factor spf30 (311 aa).

A Tudor domain is found at 76–139 (DFTPGNLVMA…KAMPEEKRQE (64 aa)). 2 disordered regions span residues 154–183 (RSTP…RASS) and 276–311 (STED…DEDS). The segment covering 168–183 (ASMSTSPSNYASRASS) has biased composition (polar residues). At Ser-173 the chain carries Phosphoserine. Basic and acidic residues predominate over residues 301–311 (HIYNYREDEDS).

Belongs to the SMN family. In terms of assembly, associates with spliceosomes.

The protein localises to the nucleus. Functionally, involved in spliceosome assembly. This Schizosaccharomyces pombe (strain 972 / ATCC 24843) (Fission yeast) protein is Splicing factor spf30 (spf30).